Reading from the N-terminus, the 426-residue chain is Glutamate-1-semialdehyde 2,1-aminomutase (426 aa).

Residue Lys265 is modified to N6-(pyridoxal phosphate)lysine.

Belongs to the class-III pyridoxal-phosphate-dependent aminotransferase family. HemL subfamily. Homodimer. Pyridoxal 5'-phosphate serves as cofactor.

The protein localises to the cytoplasm. It carries out the reaction (S)-4-amino-5-oxopentanoate = 5-aminolevulinate. It participates in porphyrin-containing compound metabolism; protoporphyrin-IX biosynthesis; 5-aminolevulinate from L-glutamyl-tRNA(Glu): step 2/2. The protein is Glutamate-1-semialdehyde 2,1-aminomutase of Escherichia coli O157:H7.